Reading from the N-terminus, the 832-residue chain is Protein P (832 aa).

Residues 1–177 (MPLSCQHFRK…FCGSPYSWEQ (177 aa)) form a terminal protein domain (TP) region. The spacer stretch occupies residues 178–335 (ELQHGAEPFC…NCLSHIVNLL (158 aa)). The tract at residues 198–264 (SIGPAVPSQH…HNTASSSSSC (67 aa)) is disordered. Positions 336–679 (EDWGPCTEHG…YLTLYPVARQ (344 aa)) are polymerase/reverse transcriptase domain (RT). The 244-residue stretch at 346–589 (EHLIRIPRTP…YSLHFMGYVI (244 aa)) folds into the Reverse transcriptase domain. Mg(2+)-binding residues include aspartate 418, aspartate 540, and aspartate 541.

This sequence belongs to the hepadnaviridae P protein family.

It carries out the reaction DNA(n) + a 2'-deoxyribonucleoside 5'-triphosphate = DNA(n+1) + diphosphate. The catalysed reaction is Endonucleolytic cleavage to 5'-phosphomonoester.. With respect to regulation, activated by host HSP70 and HSP40 in vitro to be able to bind the epsilon loop of the pgRNA. Because deletion of the RNase H region renders the protein partly chaperone-independent, the chaperones may be needed indirectly to relieve occlusion of the RNA-binding site by this domain. Inhibited by several reverse-transcriptase inhibitors: Lamivudine, Adefovir and Entecavir. Functionally, multifunctional enzyme that converts the viral RNA genome into dsDNA in viral cytoplasmic capsids. This enzyme displays a DNA polymerase activity that can copy either DNA or RNA templates, and a ribonuclease H (RNase H) activity that cleaves the RNA strand of RNA-DNA heteroduplexes in a partially processive 3'- to 5'-endonucleasic mode. Neo-synthesized pregenomic RNA (pgRNA) are encapsidated together with the P protein, and reverse-transcribed inside the nucleocapsid. Initiation of reverse-transcription occurs first by binding the epsilon loop on the pgRNA genome, and is initiated by protein priming, thereby the 5'-end of (-)DNA is covalently linked to P protein. Partial (+)DNA is synthesized from the (-)DNA template and generates the relaxed circular DNA (RC-DNA) genome. After budding and infection, the RC-DNA migrates in the nucleus, and is converted into a plasmid-like covalently closed circular DNA (cccDNA). The activity of P protein does not seem to be necessary for cccDNA generation, and is presumably released from (+)DNA by host nuclear DNA repair machinery. The chain is Protein P from Pongo pygmaeus (Bornean orangutan).